The chain runs to 184 residues: Copper transporter 6 (184 aa).

Positions 1–25 (MRGMGDDGMGPMAMAPPRSGHATAA) are enriched in low complexity. A disordered region spans residues 1-27 (MRGMGDDGMGPMAMAPPRSGHATAAAP). 2 consecutive transmembrane segments (helical) span residues 64-84 (YALC…LSVL) and 124-144 (MAYL…LAAV).

The protein belongs to the copper transporter (Ctr) (TC 1.A.56) family. SLC31A subfamily.

It is found in the membrane. Involved in the transport of copper. The protein is Copper transporter 6 (COPT6) of Oryza sativa subsp. japonica (Rice).